We begin with the raw amino-acid sequence, 224 residues long: Orotate phosphoribosyltransferase (224 aa).

5-phospho-alpha-D-ribose 1-diphosphate-binding positions include lysine 26, 73 to 74, arginine 100, lysine 101, lysine 104, histidine 106, and 127 to 135; these read YK and EDVTTAGTS. Residues threonine 131 and arginine 160 each coordinate orotate.

It belongs to the purine/pyrimidine phosphoribosyltransferase family. PyrE subfamily. In terms of assembly, homodimer. It depends on Mg(2+) as a cofactor.

The enzyme catalyses orotidine 5'-phosphate + diphosphate = orotate + 5-phospho-alpha-D-ribose 1-diphosphate. It participates in pyrimidine metabolism; UMP biosynthesis via de novo pathway; UMP from orotate: step 1/2. Its function is as follows. Catalyzes the transfer of a ribosyl phosphate group from 5-phosphoribose 1-diphosphate to orotate, leading to the formation of orotidine monophosphate (OMP). The chain is Orotate phosphoribosyltransferase from Clostridium acetobutylicum (strain ATCC 824 / DSM 792 / JCM 1419 / IAM 19013 / LMG 5710 / NBRC 13948 / NRRL B-527 / VKM B-1787 / 2291 / W).